Reading from the N-terminus, the 142-residue chain is Putative pre-16S rRNA nuclease (142 aa).

It belongs to the YqgF nuclease family.

The protein resides in the cytoplasm. Could be a nuclease involved in processing of the 5'-end of pre-16S rRNA. In Lactobacillus delbrueckii subsp. bulgaricus (strain ATCC BAA-365 / Lb-18), this protein is Putative pre-16S rRNA nuclease.